The following is a 364-amino-acid chain: Alanine racemase (364 aa).

Residue Lys34 is the Proton acceptor; specific for D-alanine of the active site. The residue at position 34 (Lys34) is an N6-(pyridoxal phosphate)lysine. Arg129 contributes to the substrate binding site. The Proton acceptor; specific for L-alanine role is filled by Tyr259. Met307 contributes to the substrate binding site.

Belongs to the alanine racemase family. Pyridoxal 5'-phosphate serves as cofactor.

It carries out the reaction L-alanine = D-alanine. The protein operates within amino-acid biosynthesis; D-alanine biosynthesis; D-alanine from L-alanine: step 1/1. In terms of biological role, catalyzes the interconversion of L-alanine and D-alanine. May also act on other amino acids. The protein is Alanine racemase (alr) of Coxiella burnetii (strain CbuG_Q212) (Coxiella burnetii (strain Q212)).